The primary structure comprises 382 residues: Histidinol-phosphate aminotransferase (382 aa).

At lysine 215 the chain carries N6-(pyridoxal phosphate)lysine. The disordered stretch occupies residues asparagine 363–isoleucine 382.

It belongs to the class-II pyridoxal-phosphate-dependent aminotransferase family. Histidinol-phosphate aminotransferase subfamily. Homodimer. Requires pyridoxal 5'-phosphate as cofactor.

The enzyme catalyses L-histidinol phosphate + 2-oxoglutarate = 3-(imidazol-4-yl)-2-oxopropyl phosphate + L-glutamate. The protein operates within amino-acid biosynthesis; L-histidine biosynthesis; L-histidine from 5-phospho-alpha-D-ribose 1-diphosphate: step 7/9. In Yersinia pseudotuberculosis serotype O:3 (strain YPIII), this protein is Histidinol-phosphate aminotransferase.